Consider the following 476-residue polypeptide: MVLNRYSLITNCNHKTLGLYYLWFSFLFGSYGFLLSVILRTELYSSSLRIIAQENVNLYNMIFTIHGIIMIFFNIMPGLFGGFGNYFLPILCGSPELAYPRINSISLLLQPIAFVLVILSTAAEFGGGTGWTLYPPLSTSLMSLSPVAVDVIIFGLLVSGVASIMSSLNFITTVMHLRAKGLTLGILSVSTWSLIITSGMLLLTLPVLTGGVLMLLSDLHFNTLFFDPTFAGDPILYQHLFWFFGHPEVYILILPAFGVISHVISTNYCRNLFGNQSMILAMGCIAVLGSLVWVHHMYTTGLEVDTRAYFTSTTILISIPTGTKVFNWICTYMSSNFGMIHSSSLLSLLFICTFTFGGTTGVILGNAAIDVALHDTYYVIAHFHFVLSIGAIIGLFTTVSAFQDNFFGKNLRENSIVILWSMLFFVGVILTFLPMHFLGFNVMPRRIPDYPDALNGWNMICSIGSTMTLFGLLIFK.

A helical membrane pass occupies residues 19–39; the sequence is LYYLWFSFLFGSYGFLLSVIL. E42 is a Ca(2+) binding site. Transmembrane regions (helical) follow at residues 61-81, 105-125, 151-171, 194-214, 240-260, 278-298, 310-330, and 345-365; these read MIFTIHGIIMIFFNIMPGLFG, ISLLLQPIAFVLVILSTAAEF, VIIFGLLVSGVASIMSSLNFI, LIITSGMLLLTLPVLTGGVLM, LFWFFGHPEVYILILPAFGVI, MILAMGCIAVLGSLVWVHHMY, FTSTTILISIPTGTKVFNWIC, and LLSLLFICTFTFGGTTGVILG. H66 provides a ligand contact to Fe(II)-heme a. Residue H246 coordinates Cu cation. A cross-link (1'-histidyl-3'-tyrosine (His-Tyr)) is located at residues 246–250; that stretch reads HPEVY. Position 250 (Y250) interacts with O2. Residues H295 and H296 each coordinate Cu cation. Positions 374 and 375 each coordinate Mg(2+). 2 consecutive transmembrane segments (helical) span residues 379–399 and 415–435; these read VIAHFHFVLSIGAIIGLFTTV and SIVILWSMLFFVGVILTFLPM. H382 serves as a coordination point for heme a3. Residue H384 participates in Fe(II)-heme a binding. P448 lines the Ca(2+) pocket. Residues 455-475 traverse the membrane as a helical segment; that stretch reads NGWNMICSIGSTMTLFGLLIF.

This sequence belongs to the heme-copper respiratory oxidase family. Component of the cytochrome c oxidase (complex IV, CIV), a multisubunit enzyme composed of a catalytic core of 3 subunits and several supernumerary subunits. The complex exists as a monomer or a dimer and forms supercomplexes (SCs) in the inner mitochondrial membrane with ubiquinol-cytochrome c oxidoreductase (cytochrome b-c1 complex, complex III, CIII). The cofactor is heme. Cu cation serves as cofactor.

It localises to the mitochondrion inner membrane. It catalyses the reaction 4 Fe(II)-[cytochrome c] + O2 + 8 H(+)(in) = 4 Fe(III)-[cytochrome c] + 2 H2O + 4 H(+)(out). Its pathway is energy metabolism; oxidative phosphorylation. Its function is as follows. Component of the cytochrome c oxidase, the last enzyme in the mitochondrial electron transport chain which drives oxidative phosphorylation. The respiratory chain contains 3 multisubunit complexes succinate dehydrogenase (complex II, CII), ubiquinol-cytochrome c oxidoreductase (cytochrome b-c1 complex, complex III, CIII) and cytochrome c oxidase (complex IV, CIV), that cooperate to transfer electrons derived from NADH and succinate to molecular oxygen, creating an electrochemical gradient over the inner membrane that drives transmembrane transport and the ATP synthase. Cytochrome c oxidase is the component of the respiratory chain that catalyzes the reduction of oxygen to water. Electrons originating from reduced cytochrome c in the intermembrane space (IMS) are transferred via the dinuclear copper A center (CU(A)) of subunit 2 and heme A of subunit 1 to the active site in subunit 1, a binuclear center (BNC) formed by heme A3 and copper B (CU(B)). The BNC reduces molecular oxygen to 2 water molecules using 4 electrons from cytochrome c in the IMS and 4 protons from the mitochondrial matrix. This Plasmodium falciparum protein is Cytochrome c oxidase subunit 1 (MT-CO1).